The sequence spans 529 residues: uncharacterized protein (529 aa).

Aspartate 389 functions as the Nucleophile in the catalytic mechanism. Glutamate 392 is a catalytic residue. Aspartate 459 functions as the Proton donor in the catalytic mechanism.

Belongs to the glycosyl hydrolase 31 family.

This is an uncharacterized protein from Pseudescherichia vulneris (Escherichia vulneris).